Here is a 399-residue protein sequence, read N- to C-terminus: UDP-N-acetylglucosamine--N-acetylmuramyl-(pentapeptide) pyrophosphoryl-undecaprenol N-acetylglucosamine transferase (399 aa).

The disordered stretch occupies residues 1–31; the sequence is MTSRFGHSQHPRRGRSARARAGRREGVQSNF. The segment covering 7-21 has biased composition (basic residues); the sequence is HSQHPRRGRSARARA. UDP-N-acetyl-alpha-D-glucosamine contacts are provided by residues 58–60, Asn-170, Arg-206, Ser-234, Ile-288, and Gln-333; that span reads TGG.

It belongs to the glycosyltransferase 28 family. MurG subfamily.

Its subcellular location is the cell inner membrane. The catalysed reaction is di-trans,octa-cis-undecaprenyl diphospho-N-acetyl-alpha-D-muramoyl-L-alanyl-D-glutamyl-meso-2,6-diaminopimeloyl-D-alanyl-D-alanine + UDP-N-acetyl-alpha-D-glucosamine = di-trans,octa-cis-undecaprenyl diphospho-[N-acetyl-alpha-D-glucosaminyl-(1-&gt;4)]-N-acetyl-alpha-D-muramoyl-L-alanyl-D-glutamyl-meso-2,6-diaminopimeloyl-D-alanyl-D-alanine + UDP + H(+). It functions in the pathway cell wall biogenesis; peptidoglycan biosynthesis. Its function is as follows. Cell wall formation. Catalyzes the transfer of a GlcNAc subunit on undecaprenyl-pyrophosphoryl-MurNAc-pentapeptide (lipid intermediate I) to form undecaprenyl-pyrophosphoryl-MurNAc-(pentapeptide)GlcNAc (lipid intermediate II). This chain is UDP-N-acetylglucosamine--N-acetylmuramyl-(pentapeptide) pyrophosphoryl-undecaprenol N-acetylglucosamine transferase, found in Acidovorax sp. (strain JS42).